The sequence spans 260 residues: HMP-PP phosphatase (260 aa).

Aspartate 8 acts as the Nucleophile in catalysis. Residues aspartate 8, aspartate 10, and aspartate 212 each contribute to the Mg(2+) site.

The protein belongs to the HAD-like hydrolase superfamily. Cof family. Mg(2+) is required as a cofactor.

It catalyses the reaction 4-amino-2-methyl-5-(diphosphooxymethyl)pyrimidine + H2O = 4-amino-2-methyl-5-(phosphooxymethyl)pyrimidine + phosphate + H(+). Its function is as follows. Catalyzes the hydrolysis of 4-amino-2-methyl-5-hydroxymethylpyrimidine pyrophosphate (HMP-PP) to 4-amino-2-methyl-5-hydroxymethylpyrimidine phosphate (HMP-P). The sequence is that of HMP-PP phosphatase from Shigella boydii serotype 4 (strain Sb227).